The primary structure comprises 404 residues: Cysteine desulfurase IscS (404 aa).

Residues Ala75–Thr76, Asn155, Gln183, and Ser203–His205 contribute to the pyridoxal 5'-phosphate site. Position 206 is an N6-(pyridoxal phosphate)lysine (Lys206). Thr243 contributes to the pyridoxal 5'-phosphate binding site. The Cysteine persulfide intermediate role is filled by Cys328. Position 328 (Cys328) interacts with [2Fe-2S] cluster.

The protein belongs to the class-V pyridoxal-phosphate-dependent aminotransferase family. NifS/IscS subfamily. In terms of assembly, homodimer. Forms a heterotetramer with IscU, interacts with other sulfur acceptors. Pyridoxal 5'-phosphate serves as cofactor.

It is found in the cytoplasm. The enzyme catalyses (sulfur carrier)-H + L-cysteine = (sulfur carrier)-SH + L-alanine. The protein operates within cofactor biosynthesis; iron-sulfur cluster biosynthesis. In terms of biological role, master enzyme that delivers sulfur to a number of partners involved in Fe-S cluster assembly, tRNA modification or cofactor biosynthesis. Catalyzes the removal of elemental sulfur atoms from cysteine to produce alanine. Functions as a sulfur delivery protein for Fe-S cluster synthesis onto IscU, an Fe-S scaffold assembly protein, as well as other S acceptor proteins. The protein is Cysteine desulfurase IscS of Shewanella piezotolerans (strain WP3 / JCM 13877).